A 98-amino-acid polypeptide reads, in one-letter code: NADH-ubiquinone oxidoreductase chain 4L (98 aa).

Helical transmembrane passes span 1–21 (MTTMFLNLLLAFTVALVGVFI), 29–49 (TLLCLEGMMLSIFIMVALILL), and 59–79 (LPLILLVFSACEAGVGLALLV).

This sequence belongs to the complex I subunit 4L family. In terms of assembly, core subunit of respiratory chain NADH dehydrogenase (Complex I) which is composed of 45 different subunits.

It localises to the mitochondrion inner membrane. The catalysed reaction is a ubiquinone + NADH + 5 H(+)(in) = a ubiquinol + NAD(+) + 4 H(+)(out). Its function is as follows. Core subunit of the mitochondrial membrane respiratory chain NADH dehydrogenase (Complex I) which catalyzes electron transfer from NADH through the respiratory chain, using ubiquinone as an electron acceptor. Part of the enzyme membrane arm which is embedded in the lipid bilayer and involved in proton translocation. This chain is NADH-ubiquinone oxidoreductase chain 4L (MT-ND4L), found in Ornithorhynchus anatinus (Duckbill platypus).